Here is a 214-residue protein sequence, read N- to C-terminus: Pyridoxine/pyridoxamine 5'-phosphate oxidase (214 aa).

Substrate-binding positions include 8–11 and K67; that span reads RKSY. Residues 62–67, 77–78, K84, and Q106 contribute to the FMN site; these read RVVLLK and YT. Positions 124, 128, and 132 each coordinate substrate. FMN-binding positions include 141–142 and W186; that span reads QS. 192 to 194 contributes to the substrate binding site; sequence RLH. Residue R196 participates in FMN binding.

Belongs to the pyridoxamine 5'-phosphate oxidase family. Homodimer. The cofactor is FMN.

The enzyme catalyses pyridoxamine 5'-phosphate + O2 + H2O = pyridoxal 5'-phosphate + H2O2 + NH4(+). It catalyses the reaction pyridoxine 5'-phosphate + O2 = pyridoxal 5'-phosphate + H2O2. It functions in the pathway cofactor metabolism; pyridoxal 5'-phosphate salvage; pyridoxal 5'-phosphate from pyridoxamine 5'-phosphate: step 1/1. Its pathway is cofactor metabolism; pyridoxal 5'-phosphate salvage; pyridoxal 5'-phosphate from pyridoxine 5'-phosphate: step 1/1. In terms of biological role, catalyzes the oxidation of either pyridoxine 5'-phosphate (PNP) or pyridoxamine 5'-phosphate (PMP) into pyridoxal 5'-phosphate (PLP). The protein is Pyridoxine/pyridoxamine 5'-phosphate oxidase of Flavobacterium johnsoniae (strain ATCC 17061 / DSM 2064 / JCM 8514 / BCRC 14874 / CCUG 350202 / NBRC 14942 / NCIMB 11054 / UW101) (Cytophaga johnsonae).